The sequence spans 671 residues: Phospholipid:diacylglycerol acyltransferase 1 (671 aa).

The segment at 1–46 (MPLIHRKKPTEKPSTPPSEEVVHDEDSQKKPHESSKSHHKKSNGGG) is disordered. The Cytoplasmic portion of the chain corresponds to 1–54 (MPLIHRKKPTEKPSTPPSEEVVHDEDSQKKPHESSKSHHKKSNGGGKWSCIDSC). Basic and acidic residues predominate over residues 20–36 (EVVHDEDSQKKPHESSK). The helical transmembrane segment at 55 to 75 (CWFIGCVCVTWWFLLFLYNAM) threads the bilayer. The Lumenal segment spans residues 76-671 (PASFPQYVTE…EWSERIDLKL (596 aa)). Asn161 carries N-linked (GlcNAc...) asparagine glycosylation. Ser254 serves as the catalytic Acyl-ester intermediate. Residues Asn381 and Asn434 are each glycosylated (N-linked (GlcNAc...) asparagine). Catalysis depends on charge relay system residues Asp573 and His626. Residue Asn647 is glycosylated (N-linked (GlcNAc...) asparagine).

This sequence belongs to the AB hydrolase superfamily. Lipase family. In terms of tissue distribution, ubiquitous. Highest expression in young developing seeds.

It is found in the membrane. The catalysed reaction is a glycerophospholipid + a 1,2-diacyl-sn-glycerol = a monoacylglycerophospholipid + a triacyl-sn-glycerol. Its pathway is glycerolipid metabolism; triacylglycerol biosynthesis. Its function is as follows. Triacylglycerol formation by an acyl-CoA independent pathway. The enzyme preferentially transfers acyl groups from the sn-2 position of a phospholipid to diacylglycerol, thus forming an sn-1-lysophospholipid. Involved in epoxy and hydroxy fatty acid accumulation in seeds. Has complementary functions with DAG1 that are essential for triacylglycerol synthesis and normal development of both seeds and pollen. The protein is Phospholipid:diacylglycerol acyltransferase 1 (PDAT1) of Arabidopsis thaliana (Mouse-ear cress).